The primary structure comprises 452 residues: Tripartite motif-containing protein 51 (452 aa).

An RING-type zinc finger spans residues 15-56 (CPICMNYFLDPVTIDCGHSFCRPCLYLNWQDTAVLAQCSECK). The B box-type zinc-finger motif lies at 88 to 129 (SEEQICGMHRETKKMFCEVDKSLLCLPCSNSQEHRNHIHCPI). Zn(2+) contacts are provided by Cys-93, His-96, Cys-115, and His-121. A B30.2/SPRY domain is found at 269–452 (ELSAGPITGL…LRPIFCCSHF (184 aa)).

It belongs to the TRIM/RBCC family.

The chain is Tripartite motif-containing protein 51 (TRIM51) from Homo sapiens (Human).